The primary structure comprises 352 residues: Aspartic protease Bla g 2 (352 aa).

An N-terminal signal peptide occupies residues 1–19 (MIGLKLVTVLFAVATITHA). A propeptide spans 20-24 (AELQR) (removed in mature form). The Peptidase A1 domain maps to 39–346 (YAGITKIGNQ…NWENKTMGFG (308 aa)). The active site involves aspartate 55. 3 disulfide bridges follow: cysteine 59/cysteine 151, cysteine 68/cysteine 73, and cysteine 75/cysteine 136. The N-linked (GlcNAc...) asparagine glycan is linked to asparagine 117. Zn(2+) contacts are provided by histidine 178 and histidine 186. Aspartate 239 is a catalytic residue. Disulfide bonds link cysteine 261–cysteine 272 and cysteine 276–cysteine 309. An N-linked (GlcNAc...) asparagine glycan is attached at asparagine 295. Zn(2+) is bound by residues aspartate 326 and aspartate 330. A glycan (N-linked (GlcNAc...) asparagine) is linked at asparagine 340.

Belongs to the peptidase A1 family. Homodimer.

Its function is as follows. Functions as a digestive enzyme in the cockroach. This is Aspartic protease Bla g 2 from Blattella germanica (German cockroach).